Consider the following 904-residue polypeptide: Translation initiation factor IF-2 (904 aa).

3 disordered regions span residues 103-122, 137-252, and 267-315; these read YVKS…PDEE, NLEE…MVAG, and HLSA…FERP. Residues 137–177 show a composition bias toward basic and acidic residues; it reads NLEEQQRLAESDRVRDEAIQRKREEEQAAKDRAEAERKAAE. Composition is skewed to low complexity over residues 178–230 and 280–293; these read EAAA…AAPA and RGKP…SSSR. A tr-type G domain is found at 403–572; sequence SRPPVVTIMG…SLQAEVLELK (170 aa). The interval 412 to 419 is G1; it reads GHVDHGKT. 412–419 contacts GTP; it reads GHVDHGKT. Residues 437-441 are G2; sequence GITQH. The G3 stretch occupies residues 458-461; sequence DTPG. Residues 458 to 462 and 512 to 515 contribute to the GTP site; these read DTPGH and NKID. The interval 512-515 is G4; it reads NKID. A G5 region spans residues 548–550; sequence SAK.

It belongs to the TRAFAC class translation factor GTPase superfamily. Classic translation factor GTPase family. IF-2 subfamily.

It is found in the cytoplasm. One of the essential components for the initiation of protein synthesis. Protects formylmethionyl-tRNA from spontaneous hydrolysis and promotes its binding to the 30S ribosomal subunits. Also involved in the hydrolysis of GTP during the formation of the 70S ribosomal complex. In Xanthomonas euvesicatoria pv. vesicatoria (strain 85-10) (Xanthomonas campestris pv. vesicatoria), this protein is Translation initiation factor IF-2.